We begin with the raw amino-acid sequence, 227 residues long: MKHFIGNDWDHVLAPVFESGEYHKLHVFLKKEYQTKQIYPDMYHIFTAFKLTPFKDTKVVILGQDPYHNPSQANGMSFSVMPGTPLPPSLRNIYKELYDDVGAQPVNHGYLKRWADQGVLLLNAVLTVPYGQANGHQGKGWEMVTDAAIKALSERGQVVFILWGRFAQNKIPLIDQDKNVIIKSAHPSPFSANRGFFGSRPFSRCNAALKEFGRAPVDWQLPPNTEA.

The active-site Proton acceptor is the Asp-65.

The protein belongs to the uracil-DNA glycosylase (UDG) superfamily. UNG family.

The protein localises to the cytoplasm. The catalysed reaction is Hydrolyzes single-stranded DNA or mismatched double-stranded DNA and polynucleotides, releasing free uracil.. Excises uracil residues from the DNA which can arise as a result of misincorporation of dUMP residues by DNA polymerase or due to deamination of cytosine. The polypeptide is Uracil-DNA glycosylase (Lactobacillus delbrueckii subsp. bulgaricus (strain ATCC BAA-365 / Lb-18)).